The primary structure comprises 250 residues: Tetrahydromethanopterin S-methyltransferase subunit D (250 aa).

The next 6 membrane-spanning stretches (helical) occupy residues 9-29 (IIWM…VHFV), 47-67 (GTVQ…GFMM), 86-106 (IMIA…VGVV), 144-164 (IIGG…LIEV), 184-204 (LVAV…VIPS), and 230-250 (LVAS…LGGI).

The protein belongs to the MtrD family. As to quaternary structure, the complex is composed of 8 subunits; MtrA, MtrB, MtrC, MtrD, MtrE, MtrF, MtrG and MtrH.

The protein localises to the cell membrane. The catalysed reaction is 5-methyl-5,6,7,8-tetrahydromethanopterin + coenzyme M + 2 Na(+)(in) = 5,6,7,8-tetrahydromethanopterin + methyl-coenzyme M + 2 Na(+)(out). It functions in the pathway one-carbon metabolism; methanogenesis from CO(2); methyl-coenzyme M from 5,10-methylene-5,6,7,8-tetrahydromethanopterin: step 2/2. Its function is as follows. Part of a complex that catalyzes the formation of methyl-coenzyme M and tetrahydromethanopterin from coenzyme M and methyl-tetrahydromethanopterin. This is an energy-conserving, sodium-ion translocating step. In Methanosarcina barkeri (strain Fusaro / DSM 804), this protein is Tetrahydromethanopterin S-methyltransferase subunit D.